We begin with the raw amino-acid sequence, 58 residues long: Large ribosomal subunit protein uL30 (58 aa).

This sequence belongs to the universal ribosomal protein uL30 family. Part of the 50S ribosomal subunit.

The chain is Large ribosomal subunit protein uL30 from Phocaeicola vulgatus (strain ATCC 8482 / DSM 1447 / JCM 5826 / CCUG 4940 / NBRC 14291 / NCTC 11154) (Bacteroides vulgatus).